A 476-amino-acid chain; its full sequence is Small ribosomal subunit protein mS29 (476 aa).

The transit peptide at 1–54 (MLPKFRSRSSIIKNTERISNILSGGKLTVCGSKLGGLYTFEKCTFNKYYSSSQY) directs the protein to the mitochondrion. Residues 58–97 (GRPVGGNIHSSSNQQRQKNSEAPRINEIPPSTSSVEKSTT) are disordered. Polar residues-rich tracts occupy residues 65 to 74 (IHSSSNQQRQ) and 86 to 97 (PPSTSSVEKSTT). 200–207 (GAPGSGRS) provides a ligand contact to ATP.

This sequence belongs to the mitochondrion-specific ribosomal protein mS29 family. In terms of assembly, component of the mitochondrial small ribosomal subunit (mt-SSU). Mature yeast 74S mitochondrial ribosomes consist of a small (37S) and a large (54S) subunit. The 37S small subunit contains a 15S ribosomal RNA (15S mt-rRNA) and at least 32 different proteins. The 54S large subunit contains a 21S rRNA (21S mt-rRNA) and at least 45 different proteins.

It is found in the mitochondrion. Its function is as follows. Component of the mitochondrial ribosome (mitoribosome), a dedicated translation machinery responsible for the synthesis of mitochondrial genome-encoded proteins, including at least some of the essential transmembrane subunits of the mitochondrial respiratory chain. The mitoribosomes are attached to the mitochondrial inner membrane and translation products are cotranslationally integrated into the membrane. mS29 binds GTP and is probably an active GTPase. GTP hydrolysis may be linked to subunit association. mS29 also has an extraribosomal function, being required for maintenance of mitochondrial DNA. This chain is Small ribosomal subunit protein mS29 (rsm23), found in Schizosaccharomyces pombe (strain 972 / ATCC 24843) (Fission yeast).